Reading from the N-terminus, the 297-residue chain is 4-hydroxy-tetrahydrodipicolinate synthase (297 aa).

Thr45 serves as a coordination point for pyruvate. Tyr133 acts as the Proton donor/acceptor in catalysis. Catalysis depends on Lys161, which acts as the Schiff-base intermediate with substrate. Ile203 contributes to the pyruvate binding site.

It belongs to the DapA family. In terms of assembly, homotetramer; dimer of dimers.

The protein resides in the cytoplasm. It catalyses the reaction L-aspartate 4-semialdehyde + pyruvate = (2S,4S)-4-hydroxy-2,3,4,5-tetrahydrodipicolinate + H2O + H(+). It participates in amino-acid biosynthesis; L-lysine biosynthesis via DAP pathway; (S)-tetrahydrodipicolinate from L-aspartate: step 3/4. In terms of biological role, catalyzes the condensation of (S)-aspartate-beta-semialdehyde [(S)-ASA] and pyruvate to 4-hydroxy-tetrahydrodipicolinate (HTPA). The sequence is that of 4-hydroxy-tetrahydrodipicolinate synthase from Buchnera aphidicola subsp. Cinara cedri (strain Cc).